Reading from the N-terminus, the 341-residue chain is uncharacterized protein (341 aa).

Active-site residues include S111, D247, and H275.

It belongs to the DmpD/TodF/XylF esterase family.

This is an uncharacterized protein from Mycobacterium bovis (strain ATCC BAA-935 / AF2122/97).